Here is a 160-residue protein sequence, read N- to C-terminus: Transcription antitermination protein NusB (160 aa).

This sequence belongs to the NusB family.

Its function is as follows. Involved in transcription antitermination. Required for transcription of ribosomal RNA (rRNA) genes. Binds specifically to the boxA antiterminator sequence of the ribosomal RNA (rrn) operons. The protein is Transcription antitermination protein NusB of Allorhizobium ampelinum (strain ATCC BAA-846 / DSM 112012 / S4) (Agrobacterium vitis (strain S4)).